Consider the following 149-residue polypeptide: Nucleoside diphosphate kinase (149 aa).

6 residues coordinate ATP: Lys-9, Phe-57, Arg-85, Thr-91, Arg-102, and Asn-112. The active-site Pros-phosphohistidine intermediate is His-115.

It belongs to the NDK family. The cofactor is Mg(2+).

The protein localises to the cytoplasm. The catalysed reaction is a 2'-deoxyribonucleoside 5'-diphosphate + ATP = a 2'-deoxyribonucleoside 5'-triphosphate + ADP. It catalyses the reaction a ribonucleoside 5'-diphosphate + ATP = a ribonucleoside 5'-triphosphate + ADP. Functionally, major role in the synthesis of nucleoside triphosphates other than ATP. The ATP gamma phosphate is transferred to the NDP beta phosphate via a ping-pong mechanism, using a phosphorylated active-site intermediate. This is Nucleoside diphosphate kinase from Methanosarcina mazei (strain ATCC BAA-159 / DSM 3647 / Goe1 / Go1 / JCM 11833 / OCM 88) (Methanosarcina frisia).